Consider the following 446-residue polypeptide: Putative F-box protein At1g32660 (446 aa).

Composition is skewed to basic and acidic residues over residues 1–12 (MKRKDDDQEDRS) and 43–57 (NKLE…NPSK). The segment at 1-57 (MKRKDDDQEDRSCSSASKLDPIPLDLKMATVPTKSHMKKSHQNKLEEDEKEDTNPSK) is disordered. An F-box domain is found at 57–107 (KLELDSLPLDLKMAILTRIPAKSLMKLRCVSKMWSSIIRSRGFIDSYYAIS).

The protein is Putative F-box protein At1g32660 of Arabidopsis thaliana (Mouse-ear cress).